The following is a 404-amino-acid chain: Serpin-Z2B (404 aa).

The segment at 349 to 373 (GTEAAAATACTMKFLCLTLTSPVDF) is RCL.

This sequence belongs to the serpin family.

Probable serine protease inhibitor. In Oryza sativa subsp. japonica (Rice), this protein is Serpin-Z2B.